Here is a 565-residue protein sequence, read N- to C-terminus: Sulfite reductase [NADPH] hemoprotein beta-component (565 aa).

[4Fe-4S] cluster is bound by residues Cys-429, Cys-435, Cys-474, and Cys-478. Cys-478 is a siroheme binding site.

Belongs to the nitrite and sulfite reductase 4Fe-4S domain family. Alpha(8)-beta(8). The alpha component is a flavoprotein, the beta component is a hemoprotein. The cofactor is siroheme. [4Fe-4S] cluster is required as a cofactor.

It carries out the reaction hydrogen sulfide + 3 NADP(+) + 3 H2O = sulfite + 3 NADPH + 4 H(+). Its pathway is sulfur metabolism; hydrogen sulfide biosynthesis; hydrogen sulfide from sulfite (NADPH route): step 1/1. Component of the sulfite reductase complex that catalyzes the 6-electron reduction of sulfite to sulfide. This is one of several activities required for the biosynthesis of L-cysteine from sulfate. In Shewanella oneidensis (strain ATCC 700550 / JCM 31522 / CIP 106686 / LMG 19005 / NCIMB 14063 / MR-1), this protein is Sulfite reductase [NADPH] hemoprotein beta-component.